The primary structure comprises 99 residues: MALTKAEMSEYLFDKLGLSKRDAKELVELFFEEIRRALENGEQVKLSGFGNFDLRDKNQRPGRNPKTGEDIPITARRVVTFRPGQKLKSRVENASPKEE.

The interval 49-75 (FGNFDLRDKNQRPGRNPKTGEDIPITA) is disordered.

Belongs to the bacterial histone-like protein family. As to quaternary structure, heterodimer of an alpha and a beta chain.

Its function is as follows. This protein is one of the two subunits of integration host factor, a specific DNA-binding protein that functions in genetic recombination as well as in transcriptional and translational control. In Salmonella agona (strain SL483), this protein is Integration host factor subunit alpha.